The primary structure comprises 198 residues: Pyridoxal 5'-phosphate synthase subunit PdxT (198 aa).

52–54 (GES) serves as a coordination point for L-glutamine. Cysteine 84 serves as the catalytic Nucleophile. L-glutamine is bound by residues arginine 115 and 143–144 (IR). Catalysis depends on charge relay system residues histidine 179 and glutamate 181.

It belongs to the glutaminase PdxT/SNO family. In terms of assembly, in the presence of PdxS, forms a dodecamer of heterodimers. Only shows activity in the heterodimer.

It catalyses the reaction aldehydo-D-ribose 5-phosphate + D-glyceraldehyde 3-phosphate + L-glutamine = pyridoxal 5'-phosphate + L-glutamate + phosphate + 3 H2O + H(+). It carries out the reaction L-glutamine + H2O = L-glutamate + NH4(+). It functions in the pathway cofactor biosynthesis; pyridoxal 5'-phosphate biosynthesis. Functionally, catalyzes the hydrolysis of glutamine to glutamate and ammonia as part of the biosynthesis of pyridoxal 5'-phosphate. The resulting ammonia molecule is channeled to the active site of PdxS. This Methanococcoides burtonii (strain DSM 6242 / NBRC 107633 / OCM 468 / ACE-M) protein is Pyridoxal 5'-phosphate synthase subunit PdxT.